The chain runs to 291 residues: N-acetylmannosamine kinase (291 aa).

ATP contacts are provided by residues Ala5–Lys12 and Gly132–Ser139. Residues His156, Cys166, Cys168, and Cys173 each coordinate Zn(2+).

The protein belongs to the ROK (NagC/XylR) family. NanK subfamily. As to quaternary structure, homodimer.

It catalyses the reaction an N-acyl-D-mannosamine + ATP = an N-acyl-D-mannosamine 6-phosphate + ADP + H(+). The protein operates within amino-sugar metabolism; N-acetylneuraminate degradation; D-fructose 6-phosphate from N-acetylneuraminate: step 2/5. In terms of biological role, catalyzes the phosphorylation of N-acetylmannosamine (ManNAc) to ManNAc-6-P. The sequence is that of N-acetylmannosamine kinase from Escherichia coli O6:K15:H31 (strain 536 / UPEC).